A 224-amino-acid chain; its full sequence is Redox-sensing transcriptional repressor Rex (224 aa).

The H-T-H motif DNA-binding region spans Arg-17–Phe-56. Gly-91–Gly-96 is an NAD(+) binding site.

Belongs to the transcriptional regulatory Rex family. As to quaternary structure, homodimer.

The protein resides in the cytoplasm. In terms of biological role, modulates transcription in response to changes in cellular NADH/NAD(+) redox state. The protein is Redox-sensing transcriptional repressor Rex of Thermoanaerobacter pseudethanolicus (strain ATCC 33223 / 39E) (Clostridium thermohydrosulfuricum).